The following is a 296-amino-acid chain: 4-diphosphocytidyl-2-C-methyl-D-erythritol kinase (296 aa).

Residue Lys14 is part of the active site. Residue Pro97–Ser107 coordinates ATP. Residue Asp139 is part of the active site.

Belongs to the GHMP kinase family. IspE subfamily.

It catalyses the reaction 4-CDP-2-C-methyl-D-erythritol + ATP = 4-CDP-2-C-methyl-D-erythritol 2-phosphate + ADP + H(+). The protein operates within isoprenoid biosynthesis; isopentenyl diphosphate biosynthesis via DXP pathway; isopentenyl diphosphate from 1-deoxy-D-xylulose 5-phosphate: step 3/6. Functionally, catalyzes the phosphorylation of the position 2 hydroxy group of 4-diphosphocytidyl-2C-methyl-D-erythritol. This chain is 4-diphosphocytidyl-2-C-methyl-D-erythritol kinase, found in Polynucleobacter necessarius subsp. necessarius (strain STIR1).